The sequence spans 487 residues: Cytochrome P450 2C5 (487 aa).

Cysteine 432 is a heme binding site.

This sequence belongs to the cytochrome P450 family. Heme is required as a cofactor.

The protein localises to the endoplasmic reticulum membrane. The protein resides in the microsome membrane. It carries out the reaction an organic molecule + reduced [NADPH--hemoprotein reductase] + O2 = an alcohol + oxidized [NADPH--hemoprotein reductase] + H2O + H(+). In terms of biological role, cytochromes P450 are a group of heme-thiolate monooxygenases. In liver microsomes, this enzyme is involved in an NADPH-dependent electron transport pathway. It oxidizes a variety of structurally unrelated compounds, including steroids, fatty acids, and xenobiotics. The polypeptide is Cytochrome P450 2C5 (CYP2C5) (Oryctolagus cuniculus (Rabbit)).